The chain runs to 230 residues: Spliceosome-associated protein CWC15 homolog (230 aa).

Disordered stretches follow at residues 1–157 (MTTA…EEKQ) and 164–183 (AGNP…GGDF). Polar residues predominate over residues 25–34 (KLSNQYSSKD). Coiled-coil stretches lie at residues 47 to 82 (GQET…SASS) and 119 to 164 (DSDE…NILA). Over residues 52–78 (ADLRKKDLRRELEDKERNAIREKRARD) the composition is skewed to basic and acidic residues. Acidic residues predominate over residues 104 to 125 (DADEAVDELNSSDDDDSDEDDT). A compositionally biased stretch (basic and acidic residues) spans 131 to 157 (ELEKIKKERAEEKAARDEEIKEKEEKQ).

It belongs to the CWC15 family. Component of spliceosomal complex.

It is found in the nucleus. In terms of biological role, component of a spliceosomal complex that is required for activating pre-mRNA splicing. This chain is Spliceosome-associated protein CWC15 homolog, found in Caenorhabditis elegans.